Consider the following 60-residue polypeptide: Conotoxin Cal6.20 (60 aa).

The signal sequence occupies residues 1–22; it reads MKLTCVLIVAVLILTACQVIAA. 3 disulfide bridges follow: C32-C42, C35-C48, and C41-C55.

Belongs to the conotoxin O1 superfamily. As to expression, expressed by the venom duct.

It localises to the secreted. Its function is as follows. Probable neurotoxin. This Californiconus californicus (California cone) protein is Conotoxin Cal6.20.